The sequence spans 422 residues: Probable protein phosphatase 2C 43 (422 aa).

The PPM-type phosphatase domain maps to 117–393 (SSGSYADKGD…DNVTVVVICF (277 aa)). Positions 163, 164, 341, and 384 each coordinate Mn(2+).

The protein belongs to the PP2C family. Requires Mg(2+) as cofactor. The cofactor is Mn(2+).

The catalysed reaction is O-phospho-L-seryl-[protein] + H2O = L-seryl-[protein] + phosphate. The enzyme catalyses O-phospho-L-threonyl-[protein] + H2O = L-threonyl-[protein] + phosphate. The chain is Probable protein phosphatase 2C 43 from Arabidopsis thaliana (Mouse-ear cress).